Here is a 423-residue protein sequence, read N- to C-terminus: Protein SOSEKI 5 (423 aa).

The disordered stretch occupies residues 1 to 33; the sequence is MSSRVFRATPDNNYLVPRRSKDQQDTSPDRNRI. The span at 19–33 shows a compositional bias: basic and acidic residues; it reads RSKDQQDTSPDRNRI. Residues 45-136 form a DIX-like oligomerization domain region; that stretch reads RKVPVVYYLC…YVLKGSEVLD (92 aa). Disordered stretches follow at residues 150-172 and 196-258; these read SSFRDPRSLNPDKNSGDDIPAVI and SSAE…SPET. The segment covering 196-211 has biased composition (polar residues); the sequence is SSAESTQRLAADASTQ. 2 short sequence motifs (association to cell membranes) span residues 233-234 and 303-304; these read AS and CG. Residues 379 to 423 are disordered; it reads SSSYNADRCSRMGPTTEKDEEEAVRAKCIPRKPKPVAKRNNGGQQ. Over residues 406-415 the composition is skewed to basic residues; that stretch reads CIPRKPKPVA.

This sequence belongs to the SOSEKI family. In terms of assembly, homodimer. Forms long polymer filaments with other SOKs proteins polymers (e.g. SOK1, SOK2, SOK3 and SOK4) crucial for polar localization and biological activity. Binds to ANGUSTIFOLIA (AN). Expressed during embryogenesis and in roots.

It is found in the cell membrane. SOSEKI proteins (SOK1-5) locally interpret global polarity cues and can influence cell division orientation to coordinate cell polarization relative to body axes. This is Protein SOSEKI 5 from Arabidopsis thaliana (Mouse-ear cress).